A 313-amino-acid chain; its full sequence is Ketimine reductase mu-crystallin (313 aa).

Position 47 (arginine 47) interacts with 3,3',5-triiodo-L-thyronine. 13 residues coordinate NADPH: serine 90, histidine 91, arginine 118, alanine 143, valine 145, glutamine 146, asparagine 167, arginine 168, threonine 169, asparagine 172, threonine 204, methionine 205, and valine 225. Position 256 (glutamate 256) interacts with 3,3',5-triiodo-L-thyronine. Serine 291 is a binding site for NADPH.

This sequence belongs to the ornithine cyclodeaminase/mu-crystallin family. Homodimer. Binds the thyroid hormone triiodothyronine (T3); T3 binding inhibits enzymatic activity.

It localises to the cytoplasm. It carries out the reaction L-pipecolate + NADP(+) = Delta(1)-piperideine-2-carboxylate + NADPH + H(+). It catalyses the reaction L-pipecolate + NAD(+) = Delta(1)-piperideine-2-carboxylate + NADH + H(+). The catalysed reaction is L-proline + NADP(+) = 1-pyrroline-2-carboxylate + NADPH + H(+). The enzyme catalyses L-proline + NAD(+) = 1-pyrroline-2-carboxylate + NADH + H(+). It carries out the reaction (3R)-1,4-thiomorpholine-3-carboxylate + NAD(+) = 3,4-dehydrothiomorpholine-3-carboxylate + NADH + 2 H(+). It catalyses the reaction (3R)-1,4-thiomorpholine-3-carboxylate + NADP(+) = 3,4-dehydrothiomorpholine-3-carboxylate + NADPH + 2 H(+). The catalysed reaction is (S)-cystathionine ketimine + NADH + 2 H(+) = (3R,5S)-2,3,5,6,7-pentahydro-1,4-thiazepine-3,5-dicarboxylate + NAD(+). The enzyme catalyses (S)-cystathionine ketimine + NADPH + 2 H(+) = (3R,5S)-2,3,5,6,7-pentahydro-1,4-thiazepine-3,5-dicarboxylate + NADP(+). It carries out the reaction (R)-lanthionine ketimine + NADPH + 2 H(+) = (3R,5R)-1,4-thiomorpholine-3,5-dicarboxylate + NADP(+). It catalyses the reaction Delta(2)-thiazoline-2-carboxylate + NADPH + 2 H(+) = L-thiazolidine-2-carboxylate + NADP(+). Functionally, catalyzes the NAD(P)H-dependent reduction of imine double bonds of a number of cyclic ketimine substrates, including sulfur-containing cyclic ketimines. Under physiological conditions, it efficiently catalyzes delta(1)-piperideine-2-carboxylate (P2C) and delta(1)-pyrroline-2-carboxylate (Pyr2C) reduction, suggesting a central role in lysine and glutamate metabolism. Additional substrates are delta(2)-thiazoline-2-carboxylate (T2C), 3,4-dehydrothiomorpholine-3-carboxylate (AECK), and (R)-lanthionine ketimine (LK) that is reduced at very low rate compared to other substrates. Also catalyzes the NAD(P)H-dependent reduction of (S)-cystathionine ketimine (CysK). The chain is Ketimine reductase mu-crystallin from Rattus norvegicus (Rat).